A 358-amino-acid chain; its full sequence is Alanine racemase (358 aa).

Lysine 35 acts as the Proton acceptor; specific for D-alanine in catalysis. Position 35 is an N6-(pyridoxal phosphate)lysine (lysine 35). Arginine 130 provides a ligand contact to substrate. Tyrosine 255 serves as the catalytic Proton acceptor; specific for L-alanine. Methionine 303 provides a ligand contact to substrate.

It belongs to the alanine racemase family. Pyridoxal 5'-phosphate serves as cofactor.

It carries out the reaction L-alanine = D-alanine. The protein operates within amino-acid biosynthesis; D-alanine biosynthesis; D-alanine from L-alanine: step 1/1. Its function is as follows. Catalyzes the interconversion of L-alanine and D-alanine. May also act on other amino acids. The protein is Alanine racemase (alr) of Shewanella sp. (strain MR-7).